A 168-amino-acid polypeptide reads, in one-letter code: Phosphopantetheine adenylyltransferase (168 aa).

Position 10 (Thr-10) interacts with substrate. ATP-binding positions include Thr-10 to Phe-11 and His-18. Positions 42, 74, and 88 each coordinate substrate. ATP is bound by residues Gly-89 to Arg-91, Glu-99, and Asn-124 to Thr-130.

This sequence belongs to the bacterial CoaD family. As to quaternary structure, homohexamer. Mg(2+) is required as a cofactor.

The protein localises to the cytoplasm. It carries out the reaction (R)-4'-phosphopantetheine + ATP + H(+) = 3'-dephospho-CoA + diphosphate. It functions in the pathway cofactor biosynthesis; coenzyme A biosynthesis; CoA from (R)-pantothenate: step 4/5. In terms of biological role, reversibly transfers an adenylyl group from ATP to 4'-phosphopantetheine, yielding dephospho-CoA (dPCoA) and pyrophosphate. In Shewanella denitrificans (strain OS217 / ATCC BAA-1090 / DSM 15013), this protein is Phosphopantetheine adenylyltransferase.